The following is a 181-amino-acid chain: Trafficking protein particle complex subunit 3-like protein (181 aa).

Cys-68 is lipidated: S-palmitoyl cysteine.

It belongs to the TRAPP small subunits family. BET3 subfamily. In terms of assembly, homodimer. Component of the multisubunit TRAPP (transport protein particle) complex, which includes at least TRAPPC2, TRAPPC2L, TRAPPC3, TRAPPC3L, TRAPPC4, TRAPPC5, TRAPPC8, TRAPPC9, TRAPPC10, TRAPPC11 and TRAPPC12.

It is found in the golgi apparatus. Its subcellular location is the cis-Golgi network. The protein localises to the endoplasmic reticulum. Its function is as follows. May play a role in vesicular transport from endoplasmic reticulum to Golgi. The protein is Trafficking protein particle complex subunit 3-like protein (TRAPPC3L) of Homo sapiens (Human).